The following is a 493-amino-acid chain: Glutamate--tRNA ligase (493 aa).

The 'HIGH' region signature appears at 9–19 (PSPTGDPHVGT). Positions 249–253 (KLSKR) match the 'KMSKS' region motif. Position 252 (lysine 252) interacts with ATP.

The protein belongs to the class-I aminoacyl-tRNA synthetase family. Glutamate--tRNA ligase type 1 subfamily. As to quaternary structure, monomer.

Its subcellular location is the cytoplasm. The catalysed reaction is tRNA(Glu) + L-glutamate + ATP = L-glutamyl-tRNA(Glu) + AMP + diphosphate. Catalyzes the attachment of glutamate to tRNA(Glu) in a two-step reaction: glutamate is first activated by ATP to form Glu-AMP and then transferred to the acceptor end of tRNA(Glu). This Marinobacter nauticus (strain ATCC 700491 / DSM 11845 / VT8) (Marinobacter aquaeolei) protein is Glutamate--tRNA ligase.